The sequence spans 208 residues: Fibroblast growth factor 6 (208 aa).

Positions 1–37 are cleaved as a signal peptide; it reads MALGQRLFITMSRGAGRVQGTLQALVFLGVLVGMVVP. N-linked (GlcNAc...) asparagine glycosylation is present at N45. Cysteines 90 and 157 form a disulfide.

It belongs to the heparin-binding growth factors family. Interacts with FGFR1, FGFR2 and FGFR4. Affinity between fibroblast growth factors (FGFs) and their receptors is increased by heparan sulfate glycosaminoglycans that function as coreceptors. In terms of tissue distribution, embryos, adult muscles and adult testis.

It localises to the secreted. Its subcellular location is the extracellular space. Functionally, plays an important role in the regulation of cell proliferation, cell differentiation, angiogenesis and myogenesis, and is required for normal muscle regeneration. This Mus musculus (Mouse) protein is Fibroblast growth factor 6 (Fgf6).